The primary structure comprises 193 residues: Der GTPase-activating protein YihI (193 aa).

The span at 1–12 (MSAKQPNRKPTG) shows a compositional bias: basic residues. Disordered regions lie at residues 1 to 91 (MSAK…KLVM) and 143 to 193 (IIDN…PKKK). Basic and acidic residues predominate over residues 13–26 (KRKESDASALDGRE). The span at 27–36 (RKRAAKRKGL) shows a compositional bias: basic residues. The span at 40–54 (SRQQAEQSSKNNNGK) shows a compositional bias: polar residues. The span at 145 to 160 (DNDDDEEDDGSFDDAS) shows a compositional bias: acidic residues. Positions 184–193 (PEPKPEPKKK) are enriched in basic and acidic residues.

The protein belongs to the YihI family. In terms of assembly, interacts with Der.

Functionally, a GTPase-activating protein (GAP) that modifies Der/EngA GTPase function. May play a role in ribosome biogenesis. The chain is Der GTPase-activating protein YihI from Aeromonas salmonicida (strain A449).